Consider the following 428-residue polypeptide: 47 kDa outer membrane protein (428 aa).

Positions 1-25 (MAKTSKFTQTLLASALAVVAGSASA) are cleaved as a signal peptide.

It belongs to the OmpP1/FadL family.

The protein localises to the cell outer membrane. The polypeptide is 47 kDa outer membrane protein (Pasteurella multocida (strain Pm70)).